Consider the following 64-residue polypeptide: Metallothionein-like protein 1 (64 aa).

Belongs to the metallothionein superfamily. Type 15 family.

Metallothioneins have a high content of cysteine residues that bind various heavy metals. This is Metallothionein-like protein 1 (MT1) from Prunus avium (Cherry).